The following is a 587-amino-acid chain: General negative regulator of transcription subunit 4 (587 aa).

The RING-type zinc-finger motif lies at 33 to 78 (CPLCIEPMDITDKNFFPCPCGYQICQFCYNNIRQNPELNGRCPACR). The stretch at 94–128 (EELKMERAKLARKEKERKHREKERKENEYTNRKHL) forms a coiled coil. The region spanning 137-228 (NLVYVVGINP…YMDGRLIKAA (92 aa)) is the RRM domain. Residues 229 to 256 (YGTTKYCSSYLRGLPCPNPNCMFLHEPG) form a C3H1-type zinc finger. Lysine 270 is covalently cross-linked (Glycyl lysine isopeptide (Lys-Gly) (interchain with G-Cter in ubiquitin)). Phosphothreonine is present on threonine 310. At serine 312 the chain carries Phosphoserine. Residue threonine 326 is modified to Phosphothreonine. The residue at position 360 (serine 360) is a Phosphoserine. Residues 370–412 (TLNDSLGHHTTPTTENTITSTTTTTNTNATSHSHGSKKKQSLA) form a disordered region. Residues 377-402 (HHTTPTTENTITSTTTTTNTNATSHS) are compositionally biased toward low complexity.

As to quaternary structure, forms a NOT protein complex that comprises NOT1, NOT2, NOT3, NOT4 and NOT5. Subunit of the 1.0 MDa CCR4-NOT core complex that contains CCR4, CAF1, NOT1, NOT2, NOT3, NOT4, NOT5, CAF40 and CAF130. In the complex interacts with NOT1. The core complex probably is part of a less characterized 1.9 MDa CCR4-NOT complex.

It is found in the cytoplasm. Its subcellular location is the nucleus. It catalyses the reaction S-ubiquitinyl-[E2 ubiquitin-conjugating enzyme]-L-cysteine + [acceptor protein]-L-lysine = [E2 ubiquitin-conjugating enzyme]-L-cysteine + N(6)-ubiquitinyl-[acceptor protein]-L-lysine.. It functions in the pathway protein modification; protein ubiquitination. Its function is as follows. E3 ubiquitin-protein ligase component of the CCR4-NOT core complex, which in the nucleus seems to be a general transcription factor, and in the cytoplasm the major mRNA deadenylase involved in mRNA turnover. The NOT protein subcomplex negatively regulates the basal and activated transcription of many genes. Preferentially affects TC-type TATA element-dependent transcription. Could directly or indirectly inhibit component(s) of the general transcription machinery. In the cytoplasm, catalyzes monoubiquitination of RPS7/es7 in response to stalled ribosomes, initiating a HEL2-dependent response that activates the No-Go Decay (NGD) pathway. This Saccharomyces cerevisiae (strain ATCC 204508 / S288c) (Baker's yeast) protein is General negative regulator of transcription subunit 4 (MOT2).